The chain runs to 212 residues: Large ribosomal subunit protein uL4 (212 aa).

The segment covering 43-52 (NNRQGTASTK) has biased composition (polar residues). Residues 43-77 (NNRQGTASTKTRSEVRGGGRKPWRQKGTGRARAGS) are disordered. Residues 60–71 (GGRKPWRQKGTG) show a composition bias toward basic residues.

It belongs to the universal ribosomal protein uL4 family. In terms of assembly, part of the 50S ribosomal subunit.

Functionally, one of the primary rRNA binding proteins, this protein initially binds near the 5'-end of the 23S rRNA. It is important during the early stages of 50S assembly. It makes multiple contacts with different domains of the 23S rRNA in the assembled 50S subunit and ribosome. In terms of biological role, forms part of the polypeptide exit tunnel. The sequence is that of Large ribosomal subunit protein uL4 from Trichodesmium erythraeum (strain IMS101).